Reading from the N-terminus, the 38-residue chain is Photosystem II reaction center protein X (38 aa).

Residues isoleucine 9 to isoleucine 29 traverse the membrane as a helical segment.

Belongs to the PsbX family. Type 1 subfamily. PSII is composed of 1 copy each of membrane proteins PsbA, PsbB, PsbC, PsbD, PsbE, PsbF, PsbH, PsbI, PsbJ, PsbK, PsbL, PsbM, PsbT, PsbX, PsbY, PsbZ, Psb30/Ycf12, at least 3 peripheral proteins of the oxygen-evolving complex and a large number of cofactors. It forms dimeric complexes.

It is found in the plastid. It localises to the chloroplast thylakoid membrane. Its function is as follows. Involved in the binding and/or turnover of quinones at the Q(B) site of photosystem II (PSII). PSII is a light-driven water plastoquinone oxidoreductase, using light energy to abstract electrons from H(2)O, generating a proton gradient subsequently used for ATP formation. The polypeptide is Photosystem II reaction center protein X (Thalassiosira pseudonana (Marine diatom)).